Reading from the N-terminus, the 288-residue chain is Bifunctional protein MdtA (288 aa).

Residues 129–132 (TGPV), 152–156 (RKLDK), 195–198 (TAGA), and Lys256 contribute to the NADP(+) site.

As to quaternary structure, homotrimer.

It is found in the cytoplasm. It carries out the reaction 5,10-methylenetetrahydromethanopterin + NADP(+) = 5,10-methenyl-5,6,7,8-tetrahydromethanopterin + NADPH. It catalyses the reaction (6R)-5,10-methylene-5,6,7,8-tetrahydrofolate + NADP(+) = (6R)-5,10-methenyltetrahydrofolate + NADPH. Its pathway is one-carbon metabolism; formaldehyde degradation; formate from formaldehyde (H(4)MPT route): step 2/5. In terms of biological role, catalyzes the dehydrogenation of methylene-H(4)MPT. Can also catalyze the reversible dehydrogenation of methylene-H(4)F with 20-fold lower catalytic efficiency. The sequence is that of Bifunctional protein MdtA from Methylorubrum extorquens (strain ATCC 14718 / DSM 1338 / JCM 2805 / NCIMB 9133 / AM1) (Methylobacterium extorquens).